We begin with the raw amino-acid sequence, 429 residues long: GTPase Obg (429 aa).

The 158-residue stretch at 1-158 (MLIDKCTLFL…IEAQFELKYI (158 aa)) folds into the Obg domain. The OBG-type G domain occupies 159 to 330 (ADVGLLGLPN…LLKDIFKDYK (172 aa)). GTP is bound by residues 165–172 (GLPNAGKS), 190–194 (FTTLS), 211–214 (DIPG), 281–284 (NKID), and 311–313 (SGF). Mg(2+)-binding residues include Ser-172 and Thr-192. The 79-residue stretch at 351–429 (KVEKEQEDIV…RIQDVMFEIN (79 aa)) folds into the OCT domain.

The protein belongs to the TRAFAC class OBG-HflX-like GTPase superfamily. OBG GTPase family. As to quaternary structure, monomer. Requires Mg(2+) as cofactor.

Its subcellular location is the cytoplasm. Its function is as follows. An essential GTPase which binds GTP, GDP and possibly (p)ppGpp with moderate affinity, with high nucleotide exchange rates and a fairly low GTP hydrolysis rate. Plays a role in control of the cell cycle, stress response, ribosome biogenesis and in those bacteria that undergo differentiation, in morphogenesis control. The protein is GTPase Obg of Malacoplasma penetrans (strain HF-2) (Mycoplasma penetrans).